A 187-amino-acid chain; its full sequence is Calmodulin-like protein 30 (187 aa).

Positions 21 to 47 (KPSRMFSRDRQSSGLSSPGPGGFSQPS) are disordered. A compositionally biased stretch (low complexity) spans 32 to 47 (SSGLSSPGPGGFSQPS). 4 consecutive EF-hand domains span residues 46-81 (PSVN…LGQE), 82-117 (RAIE…SGGI), 129-152 (FDLN…LGER), and 153-187 (CSLE…SNNV). Ca(2+) contacts are provided by D59, D61, D63, K65, E70, D95, D97, D99, E106, D130, N132, D134, K136, E141, D166, D168, D170, and E177.

The protein belongs to the calmodulin family.

Potential calcium sensor. The protein is Calmodulin-like protein 30 of Arabidopsis thaliana (Mouse-ear cress).